The following is a 137-amino-acid chain: Holo-[acyl-carrier-protein] synthase (137 aa).

Mg(2+)-binding residues include Asp8 and Glu57.

The protein belongs to the P-Pant transferase superfamily. AcpS family. Mg(2+) serves as cofactor.

It localises to the cytoplasm. It catalyses the reaction apo-[ACP] + CoA = holo-[ACP] + adenosine 3',5'-bisphosphate + H(+). Transfers the 4'-phosphopantetheine moiety from coenzyme A to a Ser of acyl-carrier-protein. In Cereibacter sphaeroides (strain ATCC 17023 / DSM 158 / JCM 6121 / CCUG 31486 / LMG 2827 / NBRC 12203 / NCIMB 8253 / ATH 2.4.1.) (Rhodobacter sphaeroides), this protein is Holo-[acyl-carrier-protein] synthase.